The sequence spans 152 residues: SsrA-binding protein (152 aa).

This sequence belongs to the SmpB family.

It localises to the cytoplasm. Required for rescue of stalled ribosomes mediated by trans-translation. Binds to transfer-messenger RNA (tmRNA), required for stable association of tmRNA with ribosomes. tmRNA and SmpB together mimic tRNA shape, replacing the anticodon stem-loop with SmpB. tmRNA is encoded by the ssrA gene; the 2 termini fold to resemble tRNA(Ala) and it encodes a 'tag peptide', a short internal open reading frame. During trans-translation Ala-aminoacylated tmRNA acts like a tRNA, entering the A-site of stalled ribosomes, displacing the stalled mRNA. The ribosome then switches to translate the ORF on the tmRNA; the nascent peptide is terminated with the 'tag peptide' encoded by the tmRNA and targeted for degradation. The ribosome is freed to recommence translation, which seems to be the essential function of trans-translation. This chain is SsrA-binding protein, found in Rickettsia africae (strain ESF-5).